The primary structure comprises 120 residues: NAD(P)H-quinone oxidoreductase subunit 3, chloroplastic (120 aa).

A run of 3 helical transmembrane segments spans residues 9–29 (IFWAFLIISSVIPILAFLISG), 64–84 (MFALVFVVFDVETVFLYPWAM), and 88–108 (VLGVSVFVEALIFVLILIVGL).

The protein belongs to the complex I subunit 3 family. In terms of assembly, NDH is composed of at least 16 different subunits, 5 of which are encoded in the nucleus.

Its subcellular location is the plastid. It is found in the chloroplast thylakoid membrane. It carries out the reaction a plastoquinone + NADH + (n+1) H(+)(in) = a plastoquinol + NAD(+) + n H(+)(out). The enzyme catalyses a plastoquinone + NADPH + (n+1) H(+)(in) = a plastoquinol + NADP(+) + n H(+)(out). Functionally, NDH shuttles electrons from NAD(P)H:plastoquinone, via FMN and iron-sulfur (Fe-S) centers, to quinones in the photosynthetic chain and possibly in a chloroplast respiratory chain. The immediate electron acceptor for the enzyme in this species is believed to be plastoquinone. Couples the redox reaction to proton translocation, and thus conserves the redox energy in a proton gradient. The chain is NAD(P)H-quinone oxidoreductase subunit 3, chloroplastic from Ranunculus macranthus (Large buttercup).